Here is a 475-residue protein sequence, read N- to C-terminus: Sulfate adenylyltransferase subunit 1 (475 aa).

Positions 25-239 (KSLLRFLTCG…EVLETVEIQR (215 aa)) constitute a tr-type G domain. The G1 stretch occupies residues 34-41 (GSVDDGKS). 34–41 (GSVDDGKS) is a binding site for GTP. Residues 92 to 96 (GITID) form a G2 region. A G3 region spans residues 113–116 (DTPG). GTP contacts are provided by residues 113-117 (DTPGH) and 168-171 (NKMD). Positions 168-171 (NKMD) are G4. The segment at 206 to 208 (SAL) is G5.

The protein belongs to the TRAFAC class translation factor GTPase superfamily. Classic translation factor GTPase family. CysN/NodQ subfamily. Heterodimer composed of CysD, the smaller subunit, and CysN.

The catalysed reaction is sulfate + ATP + H(+) = adenosine 5'-phosphosulfate + diphosphate. It participates in sulfur metabolism; hydrogen sulfide biosynthesis; sulfite from sulfate: step 1/3. Functionally, with CysD forms the ATP sulfurylase (ATPS) that catalyzes the adenylation of sulfate producing adenosine 5'-phosphosulfate (APS) and diphosphate, the first enzymatic step in sulfur assimilation pathway. APS synthesis involves the formation of a high-energy phosphoric-sulfuric acid anhydride bond driven by GTP hydrolysis by CysN coupled to ATP hydrolysis by CysD. In Shigella boydii serotype 18 (strain CDC 3083-94 / BS512), this protein is Sulfate adenylyltransferase subunit 1.